Here is a 674-residue protein sequence, read N- to C-terminus: PTS system glucose-specific EIIBCA component (674 aa).

The 89-residue stretch at 1–89 folds into the PTS EIIB type-1 domain; sequence MASKLTTTSQ…LKLDGMKHFA (89 aa). Cys28 (phosphocysteine intermediate; for EIIB activity) is an active-site residue. Residues 117–476 enclose the PTS EIIC type-1 domain; it reads EFLSDTFRPI…DAERDEAKAQ (360 aa). 10 consecutive transmembrane segments (helical) span residues 126–146, 162–182, 193–213, 225–245, 260–280, 303–323, 344–364, 376–396, 409–429, and 442–462; these read ILWA…ADTF, YVFL…MVGA, WIGA…LGSA, VLND…GLYW, MVFV…FLLG, FILS…GLHW, PMGA…LIAL, LGGM…YGVL, GCLV…AFVF, and LGYT…VLFF. The 105-residue stretch at 542–646 folds into the PTS EIIA type-1 domain; it reads DPIFAAGKLG…PLITPVVVSN (105 aa). His594 (tele-phosphohistidine intermediate; for EIIA activity) is an active-site residue.

The protein resides in the cell membrane. The catalysed reaction is N(pros)-phospho-L-histidyl-[protein] + D-glucose(out) = D-glucose 6-phosphate(in) + L-histidyl-[protein]. The phosphoenolpyruvate-dependent sugar phosphotransferase system (sugar PTS), a major carbohydrate active transport system, catalyzes the phosphorylation of incoming sugar substrates concomitantly with their translocation across the cell membrane. This system is involved in glucose transport. This is PTS system glucose-specific EIIBCA component (ptsG) from Corynebacterium glutamicum (Brevibacterium saccharolyticum).